We begin with the raw amino-acid sequence, 364 residues long: Long-wave-sensitive opsin 1 (364 aa).

The Extracellular segment spans residues 1–52; that stretch reads MAHAWGPQRLAGGQPQANFEESTQGSIFTYTNSNSTRDPFEGPNYHIAPRWV. The O-linked (GlcNAc) serine glycan is linked to serine 22. N-linked (GlcNAc...) asparagine glycosylation is present at asparagine 34. The chain crosses the membrane as a helical span at residues 53–77; it reads YHLTSAWMVFVVIASVFTNGLVLAA. The Cytoplasmic portion of the chain corresponds to 78–89; it reads TMRFKKLRHPLN. Residues 90–115 form a helical membrane-spanning segment; sequence WILVNLAIADLAETIIASTISVVNQM. Residues 116-129 are Extracellular-facing; it reads YGYFVLGHPLCVVE. Cysteines 126 and 203 form a disulfide. Residues 130 to 149 traverse the membrane as a helical segment; that stretch reads GYTVSLCGITGLWSLAIISW. Over 150–168 the chain is Cytoplasmic; the sequence is ERWMVVCKPFGNVRFDAKL. A helical membrane pass occupies residues 169-192; sequence AITGIAFSWIWAAVWTAPPIFGWS. Topologically, residues 193 to 218 are extracellular; the sequence is RYWPHGLKTSCGPDVFSGSSYPGVQS. A helical transmembrane segment spans residues 219–246; the sequence is YMIVLMITCCFIPLSVIILCYLQVWLAI. Over 247 to 268 the chain is Cytoplasmic; it reads RAVAKQQKESESTQKAEKEVTR. A helical transmembrane segment spans residues 269–292; the sequence is MVMVMIFAYCLCWGPYTFFACFAA. The Extracellular portion of the chain corresponds to 293–300; the sequence is AHPGYAFH. Residues 301-325 form a helical membrane-spanning segment; that stretch reads PLVAALPAYFAKSATIYNPIIYVFM. N6-(retinylidene)lysine is present on lysine 312. Topologically, residues 326–364 are cytoplasmic; that stretch reads NRQFRNCILQLFGKKVDDSSELSSVSKTEASSVSSVSPA.

This sequence belongs to the G-protein coupled receptor 1 family. Opsin subfamily. Post-translationally, phosphorylated on some or all of the serine and threonine residues present in the C-terminal region. As to expression, expressed in retina (at protein level). Expressed in cone and/or rod photoreceptor cells (at protein level).

Its subcellular location is the membrane. In terms of biological role, visual pigments are the light-absorbing molecules that mediate vision. They consist of an apoprotein, opsin, covalently linked to cis-retinal. This chain is Long-wave-sensitive opsin 1 (OPN1LW), found in Bos taurus (Bovine).